Reading from the N-terminus, the 271-residue chain is Ribosomal RNA small subunit methyltransferase A (271 aa).

Residues His11, Leu13, Gly38, Glu59, Asp84, and Asn109 each coordinate S-adenosyl-L-methionine.

The protein belongs to the class I-like SAM-binding methyltransferase superfamily. rRNA adenine N(6)-methyltransferase family. RsmA subfamily.

The protein localises to the cytoplasm. The catalysed reaction is adenosine(1518)/adenosine(1519) in 16S rRNA + 4 S-adenosyl-L-methionine = N(6)-dimethyladenosine(1518)/N(6)-dimethyladenosine(1519) in 16S rRNA + 4 S-adenosyl-L-homocysteine + 4 H(+). In terms of biological role, specifically dimethylates two adjacent adenosines (A1518 and A1519) in the loop of a conserved hairpin near the 3'-end of 16S rRNA in the 30S particle. May play a critical role in biogenesis of 30S subunits. The sequence is that of Ribosomal RNA small subunit methyltransferase A from Nostoc sp. (strain PCC 7120 / SAG 25.82 / UTEX 2576).